Reading from the N-terminus, the 158-residue chain is 6,7-dimethyl-8-ribityllumazine synthase (158 aa).

Residues Phe23, 61 to 63, and 85 to 87 contribute to the 5-amino-6-(D-ribitylamino)uracil site; these read SFE and AVI. (2S)-2-hydroxy-3-oxobutyl phosphate is bound at residue 90–91; it reads DT. His93 (proton donor) is an active-site residue. 5-amino-6-(D-ribitylamino)uracil is bound at residue Phe118. Arg132 lines the (2S)-2-hydroxy-3-oxobutyl phosphate pocket.

The protein belongs to the DMRL synthase family.

The enzyme catalyses (2S)-2-hydroxy-3-oxobutyl phosphate + 5-amino-6-(D-ribitylamino)uracil = 6,7-dimethyl-8-(1-D-ribityl)lumazine + phosphate + 2 H2O + H(+). It functions in the pathway cofactor biosynthesis; riboflavin biosynthesis; riboflavin from 2-hydroxy-3-oxobutyl phosphate and 5-amino-6-(D-ribitylamino)uracil: step 1/2. In terms of biological role, catalyzes the formation of 6,7-dimethyl-8-ribityllumazine by condensation of 5-amino-6-(D-ribitylamino)uracil with 3,4-dihydroxy-2-butanone 4-phosphate. This is the penultimate step in the biosynthesis of riboflavin. The chain is 6,7-dimethyl-8-ribityllumazine synthase from Prochlorococcus marinus (strain NATL2A).